The sequence spans 475 residues: tRNA-2-methylthio-N(6)-dimethylallyladenosine synthase (475 aa).

A disordered region spans residues 1-21 (MTTAPTSPALPASSDTAPTGP). The MTTase N-terminal domain maps to 24–145 (RGLHVITWGC…LPEMVARAAR (122 aa)). Residues Cys-33, Cys-69, Cys-108, Cys-186, Cys-190, and Cys-193 each coordinate [4Fe-4S] cluster. A Radical SAM core domain is found at 172-404 (TQGNLTAFLT…QALLREQQDA (233 aa)). The TRAM domain occupies 407–469 (ADMVGTVQEI…TNSLGGTLIR (63 aa)).

Belongs to the methylthiotransferase family. MiaB subfamily. As to quaternary structure, monomer. The cofactor is [4Fe-4S] cluster.

The protein localises to the cytoplasm. The catalysed reaction is N(6)-dimethylallyladenosine(37) in tRNA + (sulfur carrier)-SH + AH2 + 2 S-adenosyl-L-methionine = 2-methylsulfanyl-N(6)-dimethylallyladenosine(37) in tRNA + (sulfur carrier)-H + 5'-deoxyadenosine + L-methionine + A + S-adenosyl-L-homocysteine + 2 H(+). In terms of biological role, catalyzes the methylthiolation of N6-(dimethylallyl)adenosine (i(6)A), leading to the formation of 2-methylthio-N6-(dimethylallyl)adenosine (ms(2)i(6)A) at position 37 in tRNAs that read codons beginning with uridine. The polypeptide is tRNA-2-methylthio-N(6)-dimethylallyladenosine synthase (Gluconobacter oxydans (strain 621H) (Gluconobacter suboxydans)).